We begin with the raw amino-acid sequence, 520 residues long: Probable cytochrome P450 6v1 (520 aa).

Cys-465 serves as a coordination point for heme.

Belongs to the cytochrome P450 family. It depends on heme as a cofactor.

Its subcellular location is the endoplasmic reticulum membrane. The protein resides in the microsome membrane. Its function is as follows. May be involved in the metabolism of insect hormones and in the breakdown of synthetic insecticides. The chain is Probable cytochrome P450 6v1 (Cyp6v1) from Drosophila melanogaster (Fruit fly).